The following is a 196-amino-acid chain: Putative tyrosine-protein phosphatase OCA1 (196 aa).

In terms of domain architecture, Tyrosine-protein phosphatase spans 33-192 (NFCPVEKQLY…SVQIDPTKMP (160 aa)). Cys130 (phosphocysteine intermediate) is an active-site residue.

Belongs to the protein-tyrosine phosphatase family.

It is found in the cytoplasm. It catalyses the reaction O-phospho-L-tyrosyl-[protein] + H2O = L-tyrosyl-[protein] + phosphate. Putative tyrosine-protein phosphatase required for protection against superoxide stress. This chain is Putative tyrosine-protein phosphatase OCA1 (OCA1), found in Debaryomyces hansenii (strain ATCC 36239 / CBS 767 / BCRC 21394 / JCM 1990 / NBRC 0083 / IGC 2968) (Yeast).